The following is a 384-amino-acid chain: Cyclohexane-1-carbonyl-CoA dehydrogenase (384 aa).

This sequence belongs to the acyl-CoA dehydrogenase family. As to quaternary structure, homotetramer. FAD serves as cofactor.

It carries out the reaction cyclohexane-1-carbonyl-CoA + oxidized [electron-transfer flavoprotein] + H(+) = cyclohex-1-ene-1-carbonyl-CoA + reduced [electron-transfer flavoprotein]. Mediates the conversion of cyclohexane-1-carbonyl-CoA (ChCoA) into cyclohex-1-ene-1-carbonyl-CoA in biosynthesis of cyclohexane-1-carboxylate, a by-product produced during fermentation of benzoate and crotonate to acetate. The protein is Cyclohexane-1-carbonyl-CoA dehydrogenase of Syntrophus aciditrophicus (strain SB).